The primary structure comprises 157 residues: SsrA-binding protein (157 aa).

The protein belongs to the SmpB family.

It localises to the cytoplasm. Functionally, required for rescue of stalled ribosomes mediated by trans-translation. Binds to transfer-messenger RNA (tmRNA), required for stable association of tmRNA with ribosomes. tmRNA and SmpB together mimic tRNA shape, replacing the anticodon stem-loop with SmpB. tmRNA is encoded by the ssrA gene; the 2 termini fold to resemble tRNA(Ala) and it encodes a 'tag peptide', a short internal open reading frame. During trans-translation Ala-aminoacylated tmRNA acts like a tRNA, entering the A-site of stalled ribosomes, displacing the stalled mRNA. The ribosome then switches to translate the ORF on the tmRNA; the nascent peptide is terminated with the 'tag peptide' encoded by the tmRNA and targeted for degradation. The ribosome is freed to recommence translation, which seems to be the essential function of trans-translation. This chain is SsrA-binding protein, found in Syntrophomonas wolfei subsp. wolfei (strain DSM 2245B / Goettingen).